Here is a 308-residue protein sequence, read N- to C-terminus: B- and T-lymphocyte attenuator (308 aa).

A signal peptide spans 1–29 (MKTVPAMLVTPRSFREFFILLLGLWSILC). Residues 30-183 (KEPTKRIGEE…ERPGRTWLLY (154 aa)) lie on the Extracellular side of the membrane. Positions 32-134 (PTKRIGEECR…SANLNSEVIN (103 aa)) constitute an Ig-like V-type domain. Disulfide bonds link C40–C69, C64–C124, and C78–C85. N-linked (GlcNAc...) asparagine glycosylation is found at N49, N74, N81, N148, and N165. Residues 184–204 (ALLPLGTSLLLLACVCLLCFL) form a helical membrane-spanning segment. Over 205-308 (RRIQGKEKKP…TEYASICVRS (104 aa)) the chain is Cytoplasmic.

As to quaternary structure, interacts with tyrosine phosphatases PTPN6/SHP-1 and PTPN11/SHP-2. Interacts with TNFRSF14/HVEM (via cysteine-rich domain 1). In terms of processing, phosphorylated on Tyr residues by TNFRSF14 and by antigen receptors cross-linking, both inducing association with PTPN6 and PTPN11. N-glycosylated.

The protein localises to the cell membrane. In terms of biological role, inhibitory receptor on lymphocytes that negatively regulates antigen receptor signaling via PTPN6/SHP-1 and PTPN11/SHP-2. May interact in cis (on the same cell) or in trans (on other cells) with TNFRSF14. In cis interactions, appears to play an immune regulatory role inhibiting in trans interactions in naive T cells to maintain a resting state. In trans interactions, can predominate during adaptive immune response to provide survival signals to effector T cells. This chain is B- and T-lymphocyte attenuator, found in Rattus norvegicus (Rat).